A 430-amino-acid chain; its full sequence is Aspartate--tRNA(Asp/Asn) ligase (430 aa).

Glu-166 is an L-aspartate binding site. The segment at 188-191 (QLYK) is aspartate. Position 210 (Arg-210) interacts with L-aspartate. Residues 210–212 (RAE), 218–220 (KHL), and Glu-353 each bind ATP. Mg(2+) is bound by residues Glu-353 and Ser-356. Residues Ser-356 and Arg-360 each coordinate L-aspartate. An ATP-binding site is contributed by 401–404 (GAER).

It belongs to the class-II aminoacyl-tRNA synthetase family. Type 2 subfamily. In terms of assembly, homodimer. It depends on Mg(2+) as a cofactor.

Its subcellular location is the cytoplasm. It carries out the reaction tRNA(Asx) + L-aspartate + ATP = L-aspartyl-tRNA(Asx) + AMP + diphosphate. Aspartyl-tRNA synthetase with relaxed tRNA specificity since it is able to aspartylate not only its cognate tRNA(Asp) but also tRNA(Asn). Reaction proceeds in two steps: L-aspartate is first activated by ATP to form Asp-AMP and then transferred to the acceptor end of tRNA(Asp/Asn). The sequence is that of Aspartate--tRNA(Asp/Asn) ligase from Methanospirillum hungatei JF-1 (strain ATCC 27890 / DSM 864 / NBRC 100397 / JF-1).